Consider the following 40-residue polypeptide: SGSKTANIGDGCFGVPIDHIGSTSGMGCGSPRPKPTPGGS.

Residues 1 to 8 (SGSKTANI) constitute a propeptide that is removed on maturation. Residues 1–40 (SGSKTANIGDGCFGVPIDHIGSTSGMGCGSPRPKPTPGGS) are disordered. Cysteines 12 and 28 form a disulfide.

The protein belongs to the natriuretic peptide family. As to expression, expressed by the venom gland.

It localises to the secreted. Its function is as follows. Snake venom natriuretic peptide that targets both NPR1 and NPR2. Exhibits hypotensive and vasodepressor activities. This chain is Natriuretic peptide PpNP-a, found in Pseudechis porphyriacus (Red-bellied black snake).